The following is a 140-amino-acid chain: 3-hydroxyacyl-[acyl-carrier-protein] dehydratase FabZ (140 aa).

His-48 is an active-site residue.

The protein belongs to the thioester dehydratase family. FabZ subfamily.

It localises to the cytoplasm. The catalysed reaction is a (3R)-hydroxyacyl-[ACP] = a (2E)-enoyl-[ACP] + H2O. Involved in unsaturated fatty acids biosynthesis. Catalyzes the dehydration of short chain beta-hydroxyacyl-ACPs and long chain saturated and unsaturated beta-hydroxyacyl-ACPs. The protein is 3-hydroxyacyl-[acyl-carrier-protein] dehydratase FabZ of Caldicellulosiruptor bescii (strain ATCC BAA-1888 / DSM 6725 / KCTC 15123 / Z-1320) (Anaerocellum thermophilum).